We begin with the raw amino-acid sequence, 105 residues long: Putative membrane protein insertion efficiency factor (105 aa).

Residues 68–105 (FHPGGLDPVPPRRNESGTEISDARPGSDGEASPGAPGL) are disordered. Over residues 77–94 (PPRRNESGTEISDARPGS) the composition is skewed to basic and acidic residues.

It belongs to the UPF0161 family.

Its subcellular location is the cell membrane. Functionally, could be involved in insertion of integral membrane proteins into the membrane. This chain is Putative membrane protein insertion efficiency factor, found in Thermobifida fusca (strain YX).